The following is a 645-amino-acid chain: uncharacterized protein (645 aa).

The first 23 residues, methionine 1–serine 23, serve as a signal peptide directing secretion. Disordered regions lie at residues isoleucine 30–serine 58 and asparagine 92–proline 129. Polar residues predominate over residues asparagine 92–threonine 102. Asparagine 107 is a glycosylation site (N-linked (GlcNAc...) asparagine). Positions asparagine 107–aspartate 119 are enriched in basic and acidic residues. Positions cysteine 135–aspartate 214 constitute a PAN 1 domain. 2 disulfide bridges follow: cysteine 161–cysteine 187 and cysteine 165–cysteine 175. Residues glutamate 225–proline 247 are disordered. PAN domains follow at residues cysteine 281 to cysteine 369 and cysteine 378 to cysteine 465. Disulfide bonds link cysteine 281-cysteine 369, cysteine 313-cysteine 341, cysteine 317-cysteine 329, cysteine 378-cysteine 465, cysteine 407-cysteine 436, and cysteine 411-cysteine 422. Residue asparagine 421 is glycosylated (N-linked (GlcNAc...) asparagine). Over residues alanine 556–isoleucine 567 the composition is skewed to basic and acidic residues. A disordered region spans residues alanine 556 to lysine 582. Asparagine 570 is a glycosylation site (N-linked (GlcNAc...) asparagine).

This is an uncharacterized protein from Caenorhabditis elegans.